Consider the following 318-residue polypeptide: Pyrimidine-specific ribonucleoside hydrolase RihA (318 aa).

The active site involves His-240.

This sequence belongs to the IUNH family. RihA subfamily.

Its function is as follows. Hydrolyzes cytidine or uridine to ribose and cytosine or uracil, respectively. The polypeptide is Pyrimidine-specific ribonucleoside hydrolase RihA (Shewanella sp. (strain ANA-3)).